The primary structure comprises 225 residues: Imidazoleglycerol-phosphate dehydratase (225 aa).

It belongs to the imidazoleglycerol-phosphate dehydratase family.

It catalyses the reaction D-erythro-1-(imidazol-4-yl)glycerol 3-phosphate = 3-(imidazol-4-yl)-2-oxopropyl phosphate + H2O. The protein operates within amino-acid biosynthesis; L-histidine biosynthesis; L-histidine from 5-phospho-alpha-D-ribose 1-diphosphate: step 6/9. This Pyricularia oryzae (strain 70-15 / ATCC MYA-4617 / FGSC 8958) (Rice blast fungus) protein is Imidazoleglycerol-phosphate dehydratase (PTH3).